The primary structure comprises 333 residues: Foldase protein PrsA (333 aa).

A signal peptide spans Met1–Ala19. Residue Cys20 is the site of N-palmitoyl cysteine attachment. The S-diacylglycerol cysteine moiety is linked to residue Cys20. The region spanning Leu155–Asp245 is the PpiC domain. The segment at Gly291 to Ser333 is disordered. The span at Asp303 to Ser333 shows a compositional bias: acidic residues.

It belongs to the PrsA family.

Its subcellular location is the cell membrane. It carries out the reaction [protein]-peptidylproline (omega=180) = [protein]-peptidylproline (omega=0). Its function is as follows. Plays a major role in protein secretion by helping the post-translocational extracellular folding of several secreted proteins. This is Foldase protein PrsA from Halalkalibacterium halodurans (strain ATCC BAA-125 / DSM 18197 / FERM 7344 / JCM 9153 / C-125) (Bacillus halodurans).